The primary structure comprises 89 residues: MAHKKAGGSSRNGRDSAGRRLGVKLYGGQAAIPGNIIVRQRGTTWFPGAGVGMGRDHTIFATVEGRVEFRKGLKGRTFISVLPTAEAAE.

It belongs to the bacterial ribosomal protein bL27 family.

The polypeptide is Large ribosomal subunit protein bL27 (Cereibacter sphaeroides (strain ATCC 17029 / ATH 2.4.9) (Rhodobacter sphaeroides)).